We begin with the raw amino-acid sequence, 335 residues long: Phosphate acyltransferase (335 aa).

It belongs to the PlsX family. As to quaternary structure, homodimer. Probably interacts with PlsY.

Its subcellular location is the cytoplasm. The catalysed reaction is a fatty acyl-[ACP] + phosphate = an acyl phosphate + holo-[ACP]. Its pathway is lipid metabolism; phospholipid metabolism. In terms of biological role, catalyzes the reversible formation of acyl-phosphate (acyl-PO(4)) from acyl-[acyl-carrier-protein] (acyl-ACP). This enzyme utilizes acyl-ACP as fatty acyl donor, but not acyl-CoA. The chain is Phosphate acyltransferase from Streptococcus equi subsp. equi (strain 4047).